We begin with the raw amino-acid sequence, 25 residues long: Xenoposin precursor fragment BM3 (25 aa).

Expressed by the skin glands.

It localises to the secreted. In terms of biological role, antimicrobial peptide. This chain is Xenoposin precursor fragment BM3, found in Xenopus boumbaensis (Mawa clawed frog).